Consider the following 1025-residue polypeptide: Multidrug resistance protein MdtC (1025 aa).

The next 12 membrane-spanning stretches (helical) occupy residues 3-23 (FFAL…AITL), 333-353 (EVEQ…FLFL), 360-380 (IIPA…MYLC), 387-407 (LSLM…IVVL), 431-451 (VGFT…PLLL), 463-483 (FAVT…TLTP), 528-548 (LVGV…ISIP), 853-873 (VILI…LYES), 875-895 (VHPL…LLAL), 897-917 (LFNA…IGIV), 953-973 (PIMM…LSGG), and 984-1004 (ITIV…TPVV).

It belongs to the resistance-nodulation-cell division (RND) (TC 2.A.6) family. MdtC subfamily. In terms of assembly, part of a tripartite efflux system composed of MdtA, MdtB and MdtC. MdtC forms a heteromultimer with MdtB.

It is found in the cell inner membrane. In terms of biological role, the MdtABC tripartite complex confers resistance against novobiocin and deoxycholate. This Escherichia coli O139:H28 (strain E24377A / ETEC) protein is Multidrug resistance protein MdtC.